A 731-amino-acid polypeptide reads, in one-letter code: E3 ubiquitin-protein ligase COP1 (731 aa).

Positions 1–40 are disordered; sequence MSGSRQAGSGSAGTSPGSSAASSVTSASSSLSSSPSPPSV. The Nuclear localization signal 1 signature appears at 109 to 113; it reads GSRKR. The segment at 136–174 adopts an RING-type zinc-finger fold; the sequence is CPICFDMIEEAYMTKCGHSFCYKCIHQSLEDNNRCPKCN. The Nuclear localization signal 2 motif lies at 195-206; the sequence is KQKQRFEEKRFK. Residues 233–301 adopt a coiled-coil conformation; that stretch reads LDLANVNLML…DIKRVEEMSG (69 aa). The short motif at 235 to 245 is the Nuclear export signal element; the sequence is LANVNLMLELL. A disordered region spans residues 305–325; that stretch reads PVSEDSTVPQFEAPSPSHSSI. WD repeat units follow at residues 419–458, 468–508, 511–551, 553–593, 597–635, 638–677, and 691–729; these read NGSS…QDAV, TCNS…RSKV, EHEK…SVAS, EAKA…QPIM, GHRK…CLRS, GHIN…TLLT, and RKED…KVLE. Positions 643 to 645 are interaction with TRIB1; it reads KNF.

The protein belongs to the COP1 family. In terms of assembly, homodimer. Homodimerization is mediated by the coiled coil domain. Component of the DCX DET1-COP1 ubiquitin ligase complex at least composed of RBX1, DET1, DDB1, CUL4A and COP1. Isoform 2 does not interact with CUL4A but still binds to RBX1, suggesting that the interaction may be mediated by another cullin protein. Isoform 1 and isoform 2 interact with CUL5 but not with CUL1, CUL2 not CUL3. Interacts with bZIP transcription factors JUN, JUNB and JUND but not with FOS, ATF2 nor XBP1. Interacts with p53 (TP53). Interacts with COPS6; this interaction stabilizes RFWD2 through reducing its auto-ubiquitination and decelerating its turnover rate. Interacts with SFN; this interaction leads to SFN degradation. Isoform 4 forms heterodimers with isoform 1, preventing its association with DET1. Interacts with p53/TP53 and MTA1. Interacts with TRIB1 (via C-terminus) and TRIB2. Autoubiquitinated. MTA1 destabilizes it by promoting its autoubiquitination. As to expression, ubiquitously expressed at low level. Expressed at higher level in testis, placenta, skeletal muscle and heart.

It is found in the nucleus speckle. The protein localises to the cytoplasm. The catalysed reaction is S-ubiquitinyl-[E2 ubiquitin-conjugating enzyme]-L-cysteine + [acceptor protein]-L-lysine = [E2 ubiquitin-conjugating enzyme]-L-cysteine + N(6)-ubiquitinyl-[acceptor protein]-L-lysine.. The protein operates within protein modification; protein ubiquitination. TRIB1 competes with substrates for RFWD2 binding. In terms of biological role, E3 ubiquitin-protein ligase that mediates ubiquitination and subsequent proteasomal degradation of target proteins. E3 ubiquitin ligases accept ubiquitin from an E2 ubiquitin-conjugating enzyme in the form of a thioester and then directly transfers the ubiquitin to targeted substrates. Involved in JUN ubiquitination and degradation. Directly involved in p53 (TP53) ubiquitination and degradation, thereby abolishing p53-dependent transcription and apoptosis. Ubiquitinates p53 independently of MDM2 or RCHY1. Probably mediates E3 ubiquitin ligase activity by functioning as the essential RING domain subunit of larger E3 complexes. In contrast, it does not constitute the catalytic RING subunit in the DCX DET1-COP1 complex that negatively regulates JUN, the ubiquitin ligase activity being mediated by RBX1. Involved in 14-3-3 protein sigma/SFN ubiquitination and proteasomal degradation, leading to AKT activation and promotion of cell survival. Ubiquitinates MTA1 leading to its proteasomal degradation. Upon binding to TRIB1, ubiquitinates CEBPA, which lacks a canonical COP1-binding motif. This is E3 ubiquitin-protein ligase COP1 from Homo sapiens (Human).